A 404-amino-acid polypeptide reads, in one-letter code: L-cysteine:1D-myo-inositol 2-amino-2-deoxy-alpha-D-glucopyranoside ligase 1 (404 aa).

Cys-47 is a Zn(2+) binding site. Residues 47 to 50 (CGIT), Thr-62, and 85 to 87 (NIT) contribute to the L-cysteinyl-5'-AMP site. The short motif at 49 to 59 (ITPYDSTHLGH) is the 'HIGH' region element. The 'ERGGDP' region motif lies at 188–193 (ERGGDP). Trp-228 lines the L-cysteinyl-5'-AMP pocket. Cys-232 serves as a coordination point for Zn(2+). Residue 250–252 (GSD) coordinates L-cysteinyl-5'-AMP. His-257 contributes to the Zn(2+) binding site. Ile-284 is an L-cysteinyl-5'-AMP binding site. Residues 290–294 (KMSKS) carry the 'KMSKS' region motif.

The protein belongs to the class-I aminoacyl-tRNA synthetase family. MshC subfamily. Monomer. Zn(2+) serves as cofactor.

The enzyme catalyses 1D-myo-inositol 2-amino-2-deoxy-alpha-D-glucopyranoside + L-cysteine + ATP = 1D-myo-inositol 2-(L-cysteinylamino)-2-deoxy-alpha-D-glucopyranoside + AMP + diphosphate + H(+). Functionally, catalyzes the ATP-dependent condensation of GlcN-Ins and L-cysteine to form L-Cys-GlcN-Ins. The protein is L-cysteine:1D-myo-inositol 2-amino-2-deoxy-alpha-D-glucopyranoside ligase 1 of Corynebacterium urealyticum (strain ATCC 43042 / DSM 7109).